The primary structure comprises 317 residues: WSCD family member AAEL009094 (317 aa).

A helical transmembrane segment spans residues L8–V28. 3 N-linked (GlcNAc...) asparagine glycosylation sites follow: N150, N226, and N232.

It belongs to the WSCD family.

It is found in the membrane. The protein is WSCD family member AAEL009094 of Aedes aegypti (Yellowfever mosquito).